We begin with the raw amino-acid sequence, 291 residues long: Oxidative stress-responsive serine-rich protein 1 (291 aa).

Residues 44 to 139 (RTTVDDTKPK…STGENSTSLD (96 aa)) are disordered. Residues 65 to 83 (STRKSSRGAVRIQRRRRSK) are compositionally biased toward basic residues. Composition is skewed to polar residues over residues 95–113 (CSTTASPSSSQLKQRSQTE) and 127–139 (KEFSTGENSTSLD). Thr143 carries the phosphothreonine modification.

Ubiquitous with high level in testis, placenta and cardiac myocytes. In terms of tissue distribution, expressed in testis, unpreganant uterus and cardiac myocytes.

The chain is Oxidative stress-responsive serine-rich protein 1 (Oser1) from Rattus norvegicus (Rat).